The chain runs to 590 residues: Monoterepene synthase TPS1, chloropastic (590 aa).

A chloroplast-targeting transit peptide spans 1-42 (MALNTFLHFPPCSLSSFSCAVPKLPLAIFHKTMARQIRCPRA). (2E)-geranyl diphosphate-binding residues include R304, D341, D345, R483, and D486. Positions 341 and 345 each coordinate Mg(2+). The DDXXD motif signature appears at 341 to 345 (DDMYD). Residues D486, T490, and E494 each contribute to the Mg(2+) site.

It belongs to the terpene synthase family. Tpsb subfamily. Monomer. Mg(2+) is required as a cofactor.

The protein localises to the plastid. Its subcellular location is the chloroplast. It carries out the reaction (2E)-geranyl diphosphate = beta-thujene + diphosphate. The enzyme catalyses (2E)-geranyl diphosphate = sabinene + diphosphate. It catalyses the reaction (2E)-geranyl diphosphate = beta-pinene + diphosphate. The catalysed reaction is (2E)-geranyl diphosphate = alpha-terpinene + diphosphate. It participates in secondary metabolite biosynthesis; terpenoid biosynthesis. Its function is as follows. Monoterpene synthase involved in the biosynthesis of volatile organic compounds. Mediates the conversion of (2E)-geranyl diphosphate (GPP) into beta-thujene, sabinene, beta-pinene and alpha-terpinene. Does not use (2E,6E)-farnesyl diphosphate (FPP) as substrate. The protein is Monoterepene synthase TPS1, chloropastic of Cananga odorata (Ylang-ylang tree).